We begin with the raw amino-acid sequence, 309 residues long: Nucleoside kinase (309 aa).

3 residues coordinate substrate: aspartate 16, glycine 42, and asparagine 46. Residue glutamine 108 coordinates ATP. Residues 110–112 (SYF) and glutamine 166 contribute to the substrate site. ATP is bound by residues asparagine 189 and 217 to 223 (KTYGKEG). Position 249 (aspartate 249) interacts with substrate. Catalysis depends on aspartate 249, which acts as the Proton acceptor.

It belongs to the carbohydrate kinase PfkB family. As to quaternary structure, homodimer. Mg(2+) serves as cofactor.

In terms of biological role, catalyzes the phosphorylation of a wide range of nucleosides to yield nucleoside monophosphates, using ATP, ITP or GTP as phosphate donor. This is Nucleoside kinase from Methanothermobacter thermautotrophicus (strain ATCC 29096 / DSM 1053 / JCM 10044 / NBRC 100330 / Delta H) (Methanobacterium thermoautotrophicum).